The sequence spans 450 residues: Probable ECA polymerase (450 aa).

The next 11 helical transmembrane spans lie at 6-26 (FSGL…LTWF), 37-57 (VFFS…TSVL), 63-83 (VGVA…CFYA), 120-140 (LMGI…FLLF), 155-175 (GVAL…IYFL), 181-201 (AWLF…MIVG), 207-227 (IIIA…ISLW), 228-248 (MLVA…LKRY), 341-361 (LVVM…GLII), 378-398 (YKAA…IVLA), and 410-430 (VFFL…FWLF).

It belongs to the WzyE family. Probably part of a complex composed of WzxE, WzyE and WzzE.

It localises to the cell inner membrane. Its pathway is bacterial outer membrane biogenesis; enterobacterial common antigen biosynthesis. Probably involved in the polymerization of enterobacterial common antigen (ECA) trisaccharide repeat units. The chain is Probable ECA polymerase from Citrobacter koseri (strain ATCC BAA-895 / CDC 4225-83 / SGSC4696).